Reading from the N-terminus, the 81-residue chain is Defensin-like protein 130 (81 aa).

Positions 1-21 are cleaved as a signal peptide; it reads MTKNTSLTIFMVVLVIGMLYT. 4 cysteine pairs are disulfide-bonded: Cys-32/Cys-81, Cys-41/Cys-63, Cys-46/Cys-75, and Cys-50/Cys-77.

The protein belongs to the DEFL family.

It localises to the secreted. The sequence is that of Defensin-like protein 130 (LCR28) from Arabidopsis thaliana (Mouse-ear cress).